Reading from the N-terminus, the 241-residue chain is Ribosome-inactivating protein luffaculin 1 (241 aa).

N-linked (GlcNAc...) asparagine glycans are attached at residues Asn28, Asn33, Asn77, and Asn84. Residue Glu159 is part of the active site. Asn205 carries N-linked (GlcNAc...) asparagine glycosylation.

This sequence belongs to the ribosome-inactivating protein family. Type 1 RIP subfamily.

The catalysed reaction is Endohydrolysis of the N-glycosidic bond at one specific adenosine on the 28S rRNA.. The sequence is that of Ribosome-inactivating protein luffaculin 1 from Luffa acutangula (Ridged gourd).